A 393-amino-acid polypeptide reads, in one-letter code: G protein-activated inward rectifier potassium channel 3 (393 aa).

Positions 1–23 are disordered; that stretch reads MAQENAAFSPGSEEPPRRRGRQR. Topologically, residues 1-57 are cytoplasmic; the sequence is MAQENAAFSPGSEEPPRRRGRQRYVEKDGRCNVQQGNVRETYRYLTDLFTTLVDLQW. Residues 58–82 form a helical membrane-spanning segment; sequence RLSLLFFVLAYALTWLFFGAIWWLI. Over 83–106 the chain is Extracellular; it reads AYGRGDLEHLEDTAWTPCVNNLNG. The helical; Pore-forming intramembrane region spans 107 to 118; the sequence is FVAAFLFSIETE. The segment at residues 119–125 is an intramembrane region (pore-forming); it reads TTIGYGH. The short motif at 120–125 is the Selectivity filter element; that stretch reads TIGYGH. The Extracellular portion of the chain corresponds to 126–134; it reads RVITDQCPE. The chain crosses the membrane as a helical span at residues 135-156; the sequence is GIVLLLLQAILGSMVNAFMVGC. Topologically, residues 157–393 are cytoplasmic; the sequence is MFVKISQPNK…LPPPESESKV (237 aa). The interval 360–393 is disordered; sequence KVEEEGAGEGAGAGDGADKEHNGCLPPPESESKV. Residues 384 to 393 show a composition bias toward pro residues; that stretch reads LPPPESESKV. The short motif at 390–393 is the PDZ-binding element; sequence ESKV.

This sequence belongs to the inward rectifier-type potassium channel (TC 1.A.2.1) family. KCNJ9 subfamily. In terms of assembly, associates with KCNJ3/GIRK1 to form a G-protein-activated heteromultimer pore-forming unit. Interacts (via PDZ-binding motif) with SNX27 (via PDZ domain); the interaction is required when endocytosed to prevent degradation in lysosomes and promote recycling to the plasma membrane. In terms of tissue distribution, expressed mainly in the brain, some expression in the skeletal muscle.

It is found in the membrane. It catalyses the reaction K(+)(in) = K(+)(out). In terms of biological role, inward rectifier potassium channels are characterized by a greater tendency to allow potassium to flow into the cell rather than out of it. Their voltage dependence is regulated by the concentration of extracellular potassium; as external potassium is raised, the voltage range of the channel opening shifts to more positive voltages. The inward rectification is mainly due to the blockage of outward current by internal magnesium. This receptor is controlled by G proteins. Unable to produce channel activity when expressed alone. Forms a functional channel in association with KCNJ3/GIRK1. This is G protein-activated inward rectifier potassium channel 3 (Kcnj9) from Mus musculus (Mouse).